A 314-amino-acid chain; its full sequence is MSFASEMKNELTRIDVEEMNAKAELSALIRMNGALSLSNQQFVINVQTENATTARRIYSLIKRVFNVEVEILVRKKMKLKKNNIYICRTKMKAKEILDELGILKDGIFTHEIDHSMIQDDEMRRSYLRGAFLAGGSVNNPETSSYHLEIFSQNESHAEGLTKLMNSYELNAKHLERKKGSITYLKEAEKISDFLSLIGGYQALLKFEDVRIVRDMRNSVNRLVNCETANLNKTVSAAMKQVESIKLIDKEIGIENLPDRLREIARIRVEHQEISLKELGEMVSTGPISKSGVNHRLRKLNDLADKIRNGEQIEL.

Residues 274-308 (SLKELGEMVSTGPISKSGVNHRLRKLNDLADKIRN) constitute a DNA-binding region (H-T-H motif).

Belongs to the WhiA family.

In terms of biological role, involved in cell division and chromosome segregation. The chain is Probable cell division protein WhiA from Staphylococcus aureus (strain USA300).